We begin with the raw amino-acid sequence, 297 residues long: Formamidopyrimidine-DNA glycosylase (297 aa).

Catalysis depends on proline 2, which acts as the Schiff-base intermediate with DNA. Glutamate 3 functions as the Proton donor in the catalytic mechanism. The active-site Proton donor; for beta-elimination activity is lysine 58. Positions 104, 127, and 170 each coordinate DNA. The FPG-type zinc finger occupies 261-297 (SVYDREGKPCRKEGCSGTIQRFVQGGRSTFYCPICQR). Arginine 287 acts as the Proton donor; for delta-elimination activity in catalysis.

This sequence belongs to the FPG family. Monomer. Requires Zn(2+) as cofactor.

The catalysed reaction is Hydrolysis of DNA containing ring-opened 7-methylguanine residues, releasing 2,6-diamino-4-hydroxy-5-(N-methyl)formamidopyrimidine.. It catalyses the reaction 2'-deoxyribonucleotide-(2'-deoxyribose 5'-phosphate)-2'-deoxyribonucleotide-DNA = a 3'-end 2'-deoxyribonucleotide-(2,3-dehydro-2,3-deoxyribose 5'-phosphate)-DNA + a 5'-end 5'-phospho-2'-deoxyribonucleoside-DNA + H(+). Its function is as follows. Involved in base excision repair of DNA damaged by oxidation or by mutagenic agents. Acts as a DNA glycosylase that recognizes and removes damaged bases. Has a preference for oxidized purines, such as 7,8-dihydro-8-oxoguanine (8-oxoG). Has AP (apurinic/apyrimidinic) lyase activity and introduces nicks in the DNA strand. Cleaves the DNA backbone by beta-delta elimination to generate a single-strand break at the site of the removed base with both 3'- and 5'-phosphates. The polypeptide is Formamidopyrimidine-DNA glycosylase (Chelativorans sp. (strain BNC1)).